Here is a 487-residue protein sequence, read N- to C-terminus: Glutamyl-tRNA(Gln) amidotransferase subunit A (487 aa).

Active-site charge relay system residues include lysine 80 and serine 155. The Acyl-ester intermediate role is filled by serine 179.

It belongs to the amidase family. GatA subfamily. Heterotrimer of A, B and C subunits.

It catalyses the reaction L-glutamyl-tRNA(Gln) + L-glutamine + ATP + H2O = L-glutaminyl-tRNA(Gln) + L-glutamate + ADP + phosphate + H(+). In terms of biological role, allows the formation of correctly charged Gln-tRNA(Gln) through the transamidation of misacylated Glu-tRNA(Gln) in organisms which lack glutaminyl-tRNA synthetase. The reaction takes place in the presence of glutamine and ATP through an activated gamma-phospho-Glu-tRNA(Gln). The polypeptide is Glutamyl-tRNA(Gln) amidotransferase subunit A (Chloroflexus aurantiacus (strain ATCC 29366 / DSM 635 / J-10-fl)).